A 238-amino-acid chain; its full sequence is Ribose-5-phosphate isomerase A (238 aa).

Substrate contacts are provided by residues 30–33 (SGST), 87–90 (DGAD), and 100–103 (KGGG). E109 serves as the catalytic Proton acceptor. Substrate is bound at residue K127.

It belongs to the ribose 5-phosphate isomerase family. In terms of assembly, homodimer.

The enzyme catalyses aldehydo-D-ribose 5-phosphate = D-ribulose 5-phosphate. It participates in carbohydrate degradation; pentose phosphate pathway; D-ribose 5-phosphate from D-ribulose 5-phosphate (non-oxidative stage): step 1/1. Functionally, catalyzes the reversible conversion of ribose-5-phosphate to ribulose 5-phosphate. The chain is Ribose-5-phosphate isomerase A from Synechococcus sp. (strain CC9311).